Consider the following 276-residue polypeptide: NADPH-dependent 7-cyano-7-deazaguanine reductase (276 aa).

80–82 provides a ligand contact to substrate; the sequence is VES. 82–83 is an NADPH binding site; the sequence is SK. Cysteine 183 functions as the Thioimide intermediate in the catalytic mechanism. Residue aspartate 190 is the Proton donor of the active site. Residue 222-223 coordinates substrate; it reads HE. Residue 251-252 coordinates NADPH; sequence RG.

This sequence belongs to the GTP cyclohydrolase I family. QueF type 2 subfamily. In terms of assembly, homodimer.

It localises to the cytoplasm. It carries out the reaction 7-aminomethyl-7-carbaguanine + 2 NADP(+) = 7-cyano-7-deazaguanine + 2 NADPH + 3 H(+). The protein operates within tRNA modification; tRNA-queuosine biosynthesis. Functionally, catalyzes the NADPH-dependent reduction of 7-cyano-7-deazaguanine (preQ0) to 7-aminomethyl-7-deazaguanine (preQ1). The polypeptide is NADPH-dependent 7-cyano-7-deazaguanine reductase (Burkholderia cenocepacia (strain HI2424)).